The sequence spans 692 residues: Potassium-transporting ATPase ATP-binding subunit (692 aa).

4 consecutive transmembrane segments (helical) span residues 35-55 (VMFI…KDLY), 64-84 (LQIS…EAIA), 213-233 (IALT…VMSL), and 254-274 (ILIS…LSAI). Asp-307 functions as the 4-aspartylphosphate intermediate in the catalytic mechanism. ATP is bound by residues Asp-344, Glu-348, 377–384 (FSASTKMS), and Lys-400. Positions 523 and 527 each coordinate Mg(2+). The next 3 membrane-spanning stretches (helical) occupy residues 592 to 612 (YFAI…VGPL), 626 to 646 (AVLS…PLAL), and 672 to 692 (MVIP…LGII).

This sequence belongs to the cation transport ATPase (P-type) (TC 3.A.3) family. Type IA subfamily. In terms of assembly, the system is composed of three essential subunits: KdpA, KdpB and KdpC.

It localises to the cell inner membrane. It catalyses the reaction K(+)(out) + ATP + H2O = K(+)(in) + ADP + phosphate + H(+). In terms of biological role, part of the high-affinity ATP-driven potassium transport (or Kdp) system, which catalyzes the hydrolysis of ATP coupled with the electrogenic transport of potassium into the cytoplasm. This subunit is responsible for energy coupling to the transport system and for the release of the potassium ions to the cytoplasm. In Leptospira interrogans serogroup Icterohaemorrhagiae serovar Lai (strain 56601), this protein is Potassium-transporting ATPase ATP-binding subunit.